An 895-amino-acid polypeptide reads, in one-letter code: Endochitinase 2 (895 aa).

A signal peptide spans 1-22; sequence MGLTNILAAFIAVSSLFIQSLA. Residues 29–340 enclose the GH18 domain; the sequence is SNLAVYWGQG…DIMKEVLLRC (312 aa). N-linked (GlcNAc...) asparagine glycosylation occurs at Asn-90. The active-site Proton donor is the Glu-175. The disordered stretch occupies residues 343 to 712; that stretch reads DPPTSTVTST…APSSSTTEDR (370 aa). Residues 346–425 show a composition bias toward low complexity; it reads TSTVTSTISA…ISTRSASTET (80 aa). Polar residues predominate over residues 426–478; it reads VTTRSQEPPSTTISTRPASTETVTTRSQEPPSSTISTRSASTETVTTRSQEPP. Residues 479–505 are compositionally biased toward low complexity; the sequence is SSTISTRSASTETSTSSQDSPSTTIST. Polar residues predominate over residues 506 to 543; sequence KSAPTGTVTTRSQDLPSTTISTRSPETETETVTTKSQD. A compositionally biased stretch (low complexity) spans 544-555; it reads SPSITLSTRSSS. The segment covering 556–577 has biased composition (polar residues); it reads AETVSTRSQHSSSTTISTKSAP. The span at 578 to 589 shows a compositional bias: low complexity; it reads TETGTTSEHSTS. The segment covering 590–657 has biased composition (polar residues); it reads MPVSTRSAST…ISTELPSQTH (68 aa). 2 stretches are compositionally biased toward low complexity: residues 658 to 692 and 699 to 712; these read STTDSTPVSSSPTIPSGSTTIIPGTASDPVSAPTT and TLTLAPSSSTTEDR. Gly-866 is lipidated: GPI-anchor amidated glycine. Residues 867 to 895 constitute a propeptide, removed in mature form; sequence GAMTVRSMDVVAKALITAGAAVLGLFLGL.

The protein belongs to the glycosyl hydrolase 18 family. Chitinase class III subfamily.

It localises to the cell membrane. The enzyme catalyses Random endo-hydrolysis of N-acetyl-beta-D-glucosaminide (1-&gt;4)-beta-linkages in chitin and chitodextrins.. May be associated with endosporulation. The protein is Endochitinase 2 (CTS2) of Coccidioides immitis (strain RS) (Valley fever fungus).